The following is a 198-amino-acid chain: Large ribosomal subunit protein bL25 (198 aa).

It belongs to the bacterial ribosomal protein bL25 family. CTC subfamily. Part of the 50S ribosomal subunit; part of the 5S rRNA/L5/L18/L25 subcomplex. Contacts the 5S rRNA. Binds to the 5S rRNA independently of L5 and L18.

In terms of biological role, this is one of the proteins that binds to the 5S RNA in the ribosome where it forms part of the central protuberance. This Chlorobium phaeobacteroides (strain DSM 266 / SMG 266 / 2430) protein is Large ribosomal subunit protein bL25.